The primary structure comprises 586 residues: CTP synthase 2 (586 aa).

The Glutamine amidotransferase type-1 domain maps to 300–554 (SIALVGKYTK…LAATGNLNAY (255 aa)). Catalysis depends on for GATase activity residues C399, H526, and E528. The interval 564-586 (SDRYSDASDDSFSEPRLAELEIS) is disordered. Phosphoserine is present on residues S568, S571, and S574.

Belongs to the CTP synthase family.

The enzyme catalyses UTP + L-glutamine + ATP + H2O = CTP + L-glutamate + ADP + phosphate + 2 H(+). It participates in pyrimidine metabolism; CTP biosynthesis via de novo pathway; CTP from UDP: step 2/2. Functionally, catalyzes the ATP-dependent amination of UTP to CTP with either L-glutamine or ammonia as the source of nitrogen. Constitutes the rate-limiting enzyme in the synthesis of cytosine nucleotides. This is CTP synthase 2 (CTPS2) from Bos taurus (Bovine).